We begin with the raw amino-acid sequence, 305 residues long: Probable cell division protein WhiA (305 aa).

The H-T-H motif DNA-binding region spans 272 to 305 (SIQQLADSLTVPITKSGVNHRLRKINKIADELTD).

The protein belongs to the WhiA family.

In terms of biological role, involved in cell division and chromosome segregation. This is Probable cell division protein WhiA from Streptococcus suis (strain 98HAH33).